Reading from the N-terminus, the 323-residue chain is Thioredoxin reductase (323 aa).

42–49 (YRAEADGA) is an FAD binding site. An intrachain disulfide couples C143 to C146. An FAD-binding site is contributed by 286 to 295 (DVLCNEVKQA).

The protein belongs to the class-II pyridine nucleotide-disulfide oxidoreductase family. In terms of assembly, homodimer. Requires FAD as cofactor.

It is found in the cytoplasm. It carries out the reaction [thioredoxin]-dithiol + NADP(+) = [thioredoxin]-disulfide + NADPH + H(+). The protein is Thioredoxin reductase (trxB) of Aquifex aeolicus (strain VF5).